Consider the following 321-residue polypeptide: Urease accessory protein UreD (321 aa).

The protein belongs to the UreD family. In terms of assembly, ureD, UreF and UreG form a complex that acts as a GTP-hydrolysis-dependent molecular chaperone, activating the urease apoprotein by helping to assemble the nickel containing metallocenter of UreC. The UreE protein probably delivers the nickel.

The protein resides in the cytoplasm. Its function is as follows. Required for maturation of urease via the functional incorporation of the urease nickel metallocenter. This chain is Urease accessory protein UreD, found in Yersinia pseudotuberculosis serotype O:1b (strain IP 31758).